A 440-amino-acid chain; its full sequence is Histidinol dehydrogenase (440 aa).

Residues Y139, Q201, and N224 each coordinate NAD(+). Residues S247, Q269, and H272 each contribute to the substrate site. The Zn(2+) site is built by Q269 and H272. Residues E337 and H338 each act as proton acceptor in the active site. 4 residues coordinate substrate: H338, D371, E425, and H430. Position 371 (D371) interacts with Zn(2+). H430 is a Zn(2+) binding site.

This sequence belongs to the histidinol dehydrogenase family. The cofactor is Zn(2+).

It catalyses the reaction L-histidinol + 2 NAD(+) + H2O = L-histidine + 2 NADH + 3 H(+). The protein operates within amino-acid biosynthesis; L-histidine biosynthesis; L-histidine from 5-phospho-alpha-D-ribose 1-diphosphate: step 9/9. In terms of biological role, catalyzes the sequential NAD-dependent oxidations of L-histidinol to L-histidinaldehyde and then to L-histidine. This is Histidinol dehydrogenase from Prochlorococcus marinus (strain MIT 9312).